A 487-amino-acid chain; its full sequence is Glutamate--tRNA ligase (487 aa).

The 'HIGH' region signature appears at 11 to 21 (PSPTGYPHLGN). Residues Cys-108, Cys-110, Cys-135, and Asp-137 each contribute to the Zn(2+) site. A 'KMSKS' region motif is present at residues 245 to 249 (KLSKR). Residue Lys-248 participates in ATP binding.

This sequence belongs to the class-I aminoacyl-tRNA synthetase family. Glutamate--tRNA ligase type 1 subfamily. Monomer. Requires Zn(2+) as cofactor.

It localises to the cytoplasm. The enzyme catalyses tRNA(Glu) + L-glutamate + ATP = L-glutamyl-tRNA(Glu) + AMP + diphosphate. Catalyzes the attachment of glutamate to tRNA(Glu) in a two-step reaction: glutamate is first activated by ATP to form Glu-AMP and then transferred to the acceptor end of tRNA(Glu). The protein is Glutamate--tRNA ligase of Dehalococcoides mccartyi (strain CBDB1).